A 404-amino-acid chain; its full sequence is Exodeoxyribonuclease 7 large subunit (404 aa).

The protein belongs to the XseA family. Heterooligomer composed of large and small subunits.

The protein resides in the cytoplasm. It catalyses the reaction Exonucleolytic cleavage in either 5'- to 3'- or 3'- to 5'-direction to yield nucleoside 5'-phosphates.. In terms of biological role, bidirectionally degrades single-stranded DNA into large acid-insoluble oligonucleotides, which are then degraded further into small acid-soluble oligonucleotides. The polypeptide is Exodeoxyribonuclease 7 large subunit (Fusobacterium nucleatum subsp. nucleatum (strain ATCC 25586 / DSM 15643 / BCRC 10681 / CIP 101130 / JCM 8532 / KCTC 2640 / LMG 13131 / VPI 4355)).